Reading from the N-terminus, the 495-residue chain is Probable aminotransferase ACS12 (495 aa).

Position 334 is an N6-(pyridoxal phosphate)lysine (Lys334).

This sequence belongs to the class-I pyridoxal-phosphate-dependent aminotransferase family. In terms of assembly, homodimer. Requires pyridoxal 5'-phosphate as cofactor. Expressed in roots. Expressed at low level in leaves, stems, flowers and siliques.

Functionally, probable aminotransferase. Does not have 1-aminocyclopropane-1-carboxylate synthase (ACS) activity, suggesting that it is not involved in ethylene biosynthesis. In Arabidopsis thaliana (Mouse-ear cress), this protein is Probable aminotransferase ACS12 (ACS12).